The following is a 107-amino-acid chain: Thiosulfate sulfurtransferase GlpE (107 aa).

Residues 19 to 107 (QDLNAVLVDI…WHKAGLPVEK (89 aa)) form the Rhodanese domain. C67 (cysteine persulfide intermediate) is an active-site residue.

It belongs to the GlpE family.

The protein localises to the cytoplasm. It carries out the reaction thiosulfate + hydrogen cyanide = thiocyanate + sulfite + 2 H(+). The catalysed reaction is thiosulfate + [thioredoxin]-dithiol = [thioredoxin]-disulfide + hydrogen sulfide + sulfite + 2 H(+). In terms of biological role, transferase that catalyzes the transfer of sulfur from thiosulfate to thiophilic acceptors such as cyanide or dithiols. May function in a CysM-independent thiosulfate assimilation pathway by catalyzing the conversion of thiosulfate to sulfite, which can then be used for L-cysteine biosynthesis. The polypeptide is Thiosulfate sulfurtransferase GlpE (Aliivibrio fischeri (strain MJ11) (Vibrio fischeri)).